A 435-amino-acid polypeptide reads, in one-letter code: Tektin-4 (435 aa).

A compositionally biased stretch (basic and acidic residues) spans 60-69; sequence DQSERQRHES. Residues 60–96 form a disordered region; it reads DQSERQRHESQQLATETQALAQRTQQDSTRTVGERLQ. The span at 70–85 shows a compositional bias: low complexity; that stretch reads QQLATETQALAQRTQQ. Coiled-coil stretches lie at residues 102–180, 310–336, and 363–411; these read KSEL…LLKR, LHKT…DKEA, and FRLL…TNSL.

This sequence belongs to the tektin family. In terms of assembly, microtubule inner protein component of sperm flagellar doublet microtubules. Post-translationally, ubiquitinated, leading to its degradation. Deubiquitinated by USP16, promoting its stability. In terms of tissue distribution, strongly expressed in spermatozoa. Also detected at low levels in pancreas. Expressed in airway epithelial cells.

The protein resides in the cytoplasm. Its subcellular location is the cytoskeleton. It localises to the cilium axoneme. It is found in the flagellum axoneme. Functionally, microtubule inner protein (MIP) part of the dynein-decorated doublet microtubules (DMTs) in cilia and flagellar axoneme. Forms filamentous polymers in the walls of ciliary and flagellar microtubules. Contributes to normal sperm motility. The sequence is that of Tektin-4 from Homo sapiens (Human).